A 351-amino-acid chain; its full sequence is tRNA pseudouridine synthase D (351 aa).

Catalysis depends on Asp-96, which acts as the Nucleophile. One can recognise a TRUD domain in the interval 174-304; that stretch reads GAPNYFGPQR…MKPERRPLVA (131 aa). Residues 244–268 are disordered; the sequence is VLPGEPEPSGAGPTGPLWGDGGTLA.

Belongs to the pseudouridine synthase TruD family.

The enzyme catalyses uridine(13) in tRNA = pseudouridine(13) in tRNA. In terms of biological role, responsible for synthesis of pseudouridine from uracil-13 in transfer RNAs. In Marinobacter nauticus (strain ATCC 700491 / DSM 11845 / VT8) (Marinobacter aquaeolei), this protein is tRNA pseudouridine synthase D.